Reading from the N-terminus, the 245-residue chain is Uridylate kinase (245 aa).

Residue 12–15 coordinates ATP; the sequence is KISG. Gly55 provides a ligand contact to UMP. Residues Gly56 and Arg60 each coordinate ATP. Residues Asp76 and 137 to 144 contribute to the UMP site; that span reads AGAPYLTT. ATP contacts are provided by Thr164, Tyr171, and Asp174.

The protein belongs to the UMP kinase family. Homohexamer.

The protein localises to the cytoplasm. It carries out the reaction UMP + ATP = UDP + ADP. The protein operates within pyrimidine metabolism; CTP biosynthesis via de novo pathway; UDP from UMP (UMPK route): step 1/1. With respect to regulation, inhibited by UTP. Catalyzes the reversible phosphorylation of UMP to UDP. The chain is Uridylate kinase from Chlamydia trachomatis serovar A (strain ATCC VR-571B / DSM 19440 / HAR-13).